A 23-amino-acid polypeptide reads, in one-letter code: Basic phospholipase A2 homolog (23 aa).

In terms of processing, contains 7 disulfide bonds. As to expression, expressed by the venom gland.

It is found in the secreted. The polypeptide is Basic phospholipase A2 homolog (Trimeresurus stejnegeri (Chinese green tree viper)).